Consider the following 141-residue polypeptide: 16 kDa protein (141 aa).

A disordered region spans residues 100-119 (TVKKSRNSKPSKKKFKERKE). The segment covering 102-115 (KKSRNSKPSKKKFK) has biased composition (basic residues).

The sequence is that of 16 kDa protein from Tobacco rattle virus (strain PLB).